The primary structure comprises 396 residues: Putative carbamoyltransferase YgeW (396 aa).

Carbamoyl phosphate contacts are provided by residues 71 to 74, Gln-98, 165 to 168, and 330 to 331; these read STRT, HPTQ, and CL.

Belongs to the aspartate/ornithine carbamoyltransferase superfamily. Homotrimer.

The chain is Putative carbamoyltransferase YgeW (ygeW) from Escherichia coli O6:H1 (strain CFT073 / ATCC 700928 / UPEC).